A 97-amino-acid polypeptide reads, in one-letter code: Citrate lyase acyl carrier protein (97 aa).

The residue at position 14 (Ser14) is an O-(phosphoribosyl dephospho-coenzyme A)serine.

It belongs to the CitD family. In terms of assembly, oligomer with a subunit composition of (alpha,beta,gamma)6.

It localises to the cytoplasm. Covalent carrier of the coenzyme of citrate lyase. The protein is Citrate lyase acyl carrier protein of Cronobacter sakazakii (strain ATCC BAA-894) (Enterobacter sakazakii).